An 805-amino-acid polypeptide reads, in one-letter code: Phenylalanine--tRNA ligase beta subunit (805 aa).

Positions 39 to 148 (APPFTGVVVA…AALRPGTDIR (110 aa)) constitute a tRNA-binding domain. Residues 399–474 (PVREPVRMRL…RVYGFERIPD (76 aa)) form the B5 domain. Residues Asp-452, Asp-458, Glu-461, and Glu-462 each coordinate Mg(2+). Positions 703–804 (SRQPAVVRDL…LVAAHNARQR (102 aa)) constitute an FDX-ACB domain.

The protein belongs to the phenylalanyl-tRNA synthetase beta subunit family. Type 1 subfamily. As to quaternary structure, tetramer of two alpha and two beta subunits. Mg(2+) serves as cofactor.

Its subcellular location is the cytoplasm. The enzyme catalyses tRNA(Phe) + L-phenylalanine + ATP = L-phenylalanyl-tRNA(Phe) + AMP + diphosphate + H(+). In Bordetella bronchiseptica (strain ATCC BAA-588 / NCTC 13252 / RB50) (Alcaligenes bronchisepticus), this protein is Phenylalanine--tRNA ligase beta subunit.